The sequence spans 426 residues: Putative phosphate permease CPn_0680/CP_0067/CPj0680/CpB0707 (426 aa).

The next 11 helical transmembrane spans lie at 1 to 21 (MLPL…NIGA), 42 to 62 (AVVI…DRVA), 87 to 107 (TAAL…GWPV), 112 to 132 (SIVG…IIYW), 137 to 157 (IILI…YLIF), 180 to 200 (FLAA…GVIL), 207 to 227 (WAVS…FYYV), 260 to 280 (LVVE…MAFA), 313 to 333 (LMAF…WRVI), 364 to 384 (ILGL…GIGL), and 399 to 419 (IVLS…LFFF).

The protein belongs to the inorganic phosphate transporter (PiT) (TC 2.A.20) family.

It localises to the cell membrane. In terms of biological role, potential transporter for phosphate. The polypeptide is Putative phosphate permease CPn_0680/CP_0067/CPj0680/CpB0707 (Chlamydia pneumoniae (Chlamydophila pneumoniae)).